Here is a 413-residue protein sequence, read N- to C-terminus: Low-salt glycan biosynthesis hexosyltransferase Agl6 (413 aa).

A disordered region spans residues 1-27; that stretch reads MSTRSQSESPVDAPQQGATNGQSASDI. Residues 16–25 show a composition bias toward polar residues; it reads QGATNGQSAS. 4 helical membrane-spanning segments follow: residues 270 to 290, 304 to 324, 355 to 375, and 389 to 409; these read LFSA…VLAW, TGIG…FGAF, IGSV…FTWV, and VVAT…FLLG.

It belongs to the glycosyltransferase 2 family.

The protein localises to the membrane. Its pathway is protein modification; protein glycosylation. It participates in cell surface structure biogenesis; S-layer biogenesis. Functionally, hexosyltransferase involved in N-glycan biosynthetic pathway that takes place under low-salt conditions (1.75 M instead of 3.4 M). Participates in the formation of the tetrasaccharide present at 'Asn-532' of S-layer glycoprotein Csg, consisting of a sulfated hexose, 2 hexoses and rhamnose. Together with Agl5, mediates the addition of sugars 1 and 2 to dolichol phosphate in the tetrasaccharide. This is Low-salt glycan biosynthesis hexosyltransferase Agl6 (agl6) from Haloferax volcanii (strain ATCC 29605 / DSM 3757 / JCM 8879 / NBRC 14742 / NCIMB 2012 / VKM B-1768 / DS2) (Halobacterium volcanii).